The chain runs to 134 residues: Small ribosomal subunit protein uS9 (134 aa).

The span at 98–114 shows a compositional bias: basic and acidic residues; that stretch reads SKQELKSHGFLTRDPRK. The interval 98–134 is disordered; that stretch reads SKQELKSHGFLTRDPRKKERKKYGHKKARKSFQFSKR. A compositionally biased stretch (basic residues) spans 115–134; that stretch reads KERKKYGHKKARKSFQFSKR.

Belongs to the universal ribosomal protein uS9 family.

In Chlamydia caviae (strain ATCC VR-813 / DSM 19441 / 03DC25 / GPIC) (Chlamydophila caviae), this protein is Small ribosomal subunit protein uS9.